A 320-amino-acid polypeptide reads, in one-letter code: (+)-corvol ether B synthase/(+)-corvol ether A synthase ((2E,6E)-farnesyl diphosphate cyclizing) (320 aa).

Residues Asp78 and Asp83 each contribute to the Mg(2+) site. Positions 78-83 match the DDXXXD motif motif; the sequence is DDLFVD. Arg171 contacts substrate. 3 residues coordinate Mg(2+): Asn217, Ser221, and Glu225.

Belongs to the terpene synthase family. The cofactor is Mg(2+).

It carries out the reaction (2E,6E)-farnesyl diphosphate + H2O = (+)-corvol ether B + diphosphate. The catalysed reaction is (2E,6E)-farnesyl diphosphate + H2O = (+)-corvol ether A + diphosphate. It functions in the pathway secondary metabolite biosynthesis; terpenoid biosynthesis. Its function is as follows. Catalyzes the conversion of (2E,6E)-farnesyl diphosphate (FPP) into (+)-corvol ether A and (+)-corvol ether B via a 1,10-cyclization, which requires isomerization of FPP to nerolidyl diphosphate (NPP) and then abstraction of the pyrophosphate from intermediate NPP leading to a (E,Z)-germacradienyl (helminthogermacradienyl) cation. The preferred substrate is (2E,6E)-farnesyl diphosphate (FPP), however geranyl diphosphate (GPP) is also able to produce small amounts of several acyclic and cyclic monoterpenes, with linalool as the main product. This chain is (+)-corvol ether B synthase/(+)-corvol ether A synthase ((2E,6E)-farnesyl diphosphate cyclizing), found in Kitasatospora setae (strain ATCC 33774 / DSM 43861 / JCM 3304 / KCC A-0304 / NBRC 14216 / KM-6054) (Streptomyces setae).